The sequence spans 410 residues: Chitinase-3-like protein 1 (410 aa).

The signal sequence occupies residues 1–48 (MGVKAAQTGIWASQGQSIRVVGFQAQTAHRAICLLGFVVLVLLQCCSA). Residues 49-410 (YKLVCYYTSW…NAIKDALAAT (362 aa)) form the GH18 domain. Cys53 and Cys78 are disulfide-bonded. An N-linked (GlcNAc...) asparagine glycan is attached at Asn87. Residues 97-98 (EW), 124-127 (GGWN), Tyr168, 231-234 (MTYD), and Arg290 each bind chitin. The cysteines at positions 327 and 391 are disulfide-linked. The important for AKT1 activation and IL8 production stretch occupies residues 351-365 (QWVGYDDQESVKSKV). A chitin-binding site is contributed by Trp379.

This sequence belongs to the glycosyl hydrolase 18 family. In terms of assembly, monomer.

The protein localises to the secreted. It localises to the extracellular space. Its subcellular location is the cytoplasm. The protein resides in the perinuclear region. It is found in the endoplasmic reticulum. Functionally, carbohydrate-binding lectin with a preference for chitin. Has no chitinase activity. May play a role in tissue remodeling and in the capacity of cells to respond to and cope with changes in their environment. Plays a role in T-helper cell type 2 (Th2) inflammatory response and IL-13-induced inflammation, regulating allergen sensitization, inflammatory cell apoptosis, dendritic cell accumulation and M2 macrophage differentiation. Facilitates invasion of pathogenic enteric bacteria into colonic mucosa and lymphoid organs. Mediates activation of AKT1 signaling pathway and subsequent IL8 production in colonic epithelial cells. Regulates antibacterial responses in lung by contributing to macrophage bacterial killing, controlling bacterial dissemination and augmenting host tolerance. Also regulates hyperoxia-induced injury, inflammation and epithelial apoptosis in lung. The chain is Chitinase-3-like protein 1 (CHI3L1) from Pongo abelii (Sumatran orangutan).